A 66-amino-acid polypeptide reads, in one-letter code: KEGYLVELGTGCKYECFKLGDNDYCLRECKARYGKGAGGYCYAFGCWCTQLYEQAVVWPLKNKTCR.

In terms of domain architecture, LCN-type CS-alpha/beta spans 1 to 66 (KEGYLVELGT…VWPLKNKTCR (66 aa)). 4 cysteine pairs are disulfide-bonded: cysteine 12/cysteine 65, cysteine 16/cysteine 41, cysteine 25/cysteine 46, and cysteine 29/cysteine 48.

The protein belongs to the long (4 C-C) scorpion toxin superfamily. Sodium channel inhibitor family. Beta subfamily. In terms of tissue distribution, expressed by the venom gland.

The protein localises to the secreted. Functionally, beta toxins bind voltage-independently at site-4 of sodium channels (Nav) and shift the voltage of activation toward more negative potentials thereby affecting sodium channel activation and promoting spontaneous and repetitive firing. Acts on human sodium channel Nav1.6/SCN8A. The polypeptide is Beta-toxin Chui3 (Centruroides huichol (Scorpion)).